The chain runs to 466 residues: MNYSRRSLFKKTLIATALSALPATLLAATKQPLVIPPLIESRRGKPVFLGLESAQVKLIDDKLVEVWGFNGQYLGPTVRVRQGDFVKLNYRNNLPHSVAMNIQGLQTNSNILGGIGHSLKPQQGWSPIVPITQPAATCYYHSCSLASSAYQNYRGLAGMWIIEDDESRQAQLPNKYGVNDIPLILQDLHLNKEGSQLFRQNEPHFYGDRLFVNGQEAPFINVGRGWIRLRILNASVSRSYPLQFDDERAFLLIAKDQGFLPEAKTVKSVLVGMGERVEILVDLNEGGNVSLIVGKKRSFLDKIDLFFNDNGELTDNTVLELRPEGLLSVFNGKPSYRFSAVATLPSQILQERAFHFDAENAMINNKRFDPRRIDVNAKQGSAERWTLSATNAMGFRIQGAKFVVESRDDVATPGNELVWQDTLWFERTAKILVKFEHSASNSQPFTFGSSDLMQADKGALGLIVVQ.

A signal peptide (tat-type signal) is located at residues 1–28 (MNYSRRSLFKKTLIATALSALPATLLAA).

Belongs to the FtsP family. In terms of processing, predicted to be exported by the Tat system. The position of the signal peptide cleavage has not been experimentally proven.

The protein resides in the periplasm. Its function is as follows. Cell division protein that is required for growth during stress conditions. May be involved in protecting or stabilizing the divisomal assembly under conditions of stress. This chain is Cell division protein FtsP, found in Actinobacillus succinogenes (strain ATCC 55618 / DSM 22257 / CCUG 43843 / 130Z).